Consider the following 301-residue polypeptide: Acetyl-coenzyme A carboxylase carboxyl transferase subunit beta (301 aa).

In terms of domain architecture, CoA carboxyltransferase N-terminal spans 25-294 (LWIKDPSTGE…NSDAPAPQKP (270 aa)).

This sequence belongs to the AccD/PCCB family. As to quaternary structure, acetyl-CoA carboxylase is a heterohexamer composed of biotin carboxyl carrier protein (AccB), biotin carboxylase (AccC) and two subunits each of ACCase subunit alpha (AccA) and ACCase subunit beta (AccD).

Its subcellular location is the cytoplasm. It catalyses the reaction N(6)-carboxybiotinyl-L-lysyl-[protein] + acetyl-CoA = N(6)-biotinyl-L-lysyl-[protein] + malonyl-CoA. The protein operates within lipid metabolism; malonyl-CoA biosynthesis; malonyl-CoA from acetyl-CoA: step 1/1. Functionally, component of the acetyl coenzyme A carboxylase (ACC) complex. Biotin carboxylase (BC) catalyzes the carboxylation of biotin on its carrier protein (BCCP) and then the CO(2) group is transferred by the transcarboxylase to acetyl-CoA to form malonyl-CoA. In Brucella canis (strain ATCC 23365 / NCTC 10854 / RM-666), this protein is Acetyl-coenzyme A carboxylase carboxyl transferase subunit beta.